The primary structure comprises 412 residues: Peptidase T (412 aa).

Residue histidine 84 coordinates Zn(2+). The active site involves aspartate 86. Aspartate 146 lines the Zn(2+) pocket. Glutamate 179 (proton acceptor) is an active-site residue. Positions 180, 202, and 385 each coordinate Zn(2+).

The protein belongs to the peptidase M20B family. Requires Zn(2+) as cofactor.

The protein resides in the cytoplasm. It catalyses the reaction Release of the N-terminal residue from a tripeptide.. In terms of biological role, cleaves the N-terminal amino acid of tripeptides. The sequence is that of Peptidase T from Pasteurella multocida (strain Pm70).